The following is a 312-amino-acid chain: MGVMAMLMLPLLLLGISGLLFIYQEVSRLWSKSAVQNKVVVITDAISGLGKECARVFHTGGARLVLCGKNWERLENLYDALISVADPSKQTFTPKLVLLDLSDISCVPDVAKEVLDCYGCVDILINNASVKVKGPAHKISLELDKKIMDANYFGPITLTKALLPNMISRRTGQIVLVNNIQGKFGIPFRTTYAASKHAALGFFDCLRAEVEEYDVVISTVSPTFIRSYHVYPEQGNWEASIWKFFFRKLTYGVHPVEVAEEVMRTVRRKKQEVFMANPIPKAAVYVRTFFPEFFFAVVACGVKEKLNVPEEG.

Positions M1–G18 are cleaved as a signal peptide. 5 residues coordinate NAD(+): S47, L49, Y192, K196, and S227. Y192 serves as the catalytic Proton acceptor.

This sequence belongs to the short-chain dehydrogenases/reductases (SDR) family.

The protein resides in the sarcoplasmic reticulum membrane. It catalyses the reaction all-trans-retinol + NAD(+) = all-trans-retinal + NADH + H(+). NADH-dependent oxidoreductase which catalyzes the oxidation of all-trans-retinol to all-trans-retinal. Plays a role in the regulation of cardiac and skeletal muscle metabolic functions. Maintains Ca(2+) intracellular homeostasis by repressing Ca(2+) release from the sarcoplasmic reticulum (SR) in myotubes, possibly through local alternations in NAD/NADH or retinol/retinal. Also plays a role in Ca(2+) homeostasis by controlling Ca(2+) overload in the cytosol and the SR in myotubes. Involved in glucose uptake into skeletal muscles and muscle performance by activating PI3K and mTORC2-mediated AKT1 phosphorylation signaling pathways, possibly through the action of its downstream catalytic product all-trans-retinoic acid. This Homo sapiens (Human) protein is Dehydrogenase/reductase SDR family member 7C.